Reading from the N-terminus, the 513-residue chain is Interferon-induced, double-stranded RNA-activated protein kinase (513 aa).

Alanine 2 bears the N-acetylalanine mark. The DRBM 1 domain maps to 8–76 (FYVDKLNKYS…AKLAVEILDN (69 aa)). Lysine 68 participates in a covalent cross-link: Glycyl lysine isopeptide (Lys-Gly) (interchain with G-Cter in ISG15). Position 82 is a phosphoserine (serine 82). The residue at position 84 (threonine 84) is a Phosphothreonine. In terms of domain architecture, DRBM 2 spans 95–162 (NYIGLVNSFA…AKNAYQKLSE (68 aa)). Tyrosine 96 carries the post-translational modification Phosphotyrosine; by autocatalysis. A Glycyl lysine isopeptide (Lys-Gly) (interchain with G-Cter in ISG15) cross-link involves residue lysine 154. Position 157 is a phosphotyrosine; by autocatalysis (tyrosine 157). Threonine 227 is modified (phosphothreonine). Residues 235–513 (DFEDIEEIGS…ISEKKKRNTC (279 aa)) form an interaction with TRAF5 region. The Protein kinase domain maps to 236–502 (FEDIEEIGSG…EILKTLAEWK (267 aa)). 242–250 (IGSGGFGQV) contributes to the ATP binding site. Position 262 is a phosphotyrosine; by autocatalysis (tyrosine 262). Lysine 265 lines the ATP pocket. Residue aspartate 373 is the Proton acceptor of the active site. A phosphothreonine; by autocatalysis mark is found at threonine 406 and threonine 411. Residue serine 416 is modified to Phosphoserine.

It belongs to the protein kinase superfamily. Ser/Thr protein kinase family. GCN2 subfamily. As to quaternary structure, homodimer. Interacts with DNAJC3. Interacts with STRBP. Forms a complex with FANCA, FANCC, FANCG and HSP70. Interacts with ADAR/ADAR1. The inactive form interacts with NCK1 and GSN. Interacts (via the kinase catalytic domain) with STAT3 (via SH2 domain), TRAF2 (C-terminus), TRAF5 (C-terminus) and TRAF6 (C-terminus). Interacts with MAP2K6, IKBKB/IKKB, IRS1, NPM1, TARBP2, NLRP1, NLRP3, NLRC4 and AIM2. Interacts (via DRBM 1 domain) with DUS2L (via DRBM domain). Interacts with DHX9 (via N-terminus) and this interaction is dependent upon activation of the kinase. Autophosphorylated on several Ser, Thr and Tyr residues. Autophosphorylation of Thr-411 is dependent on Thr-406 and is stimulated by dsRNA binding and dimerization. Autophosphorylation apparently leads to the activation of the kinase. Tyrosine autophosphorylation is essential for efficient dsRNA-binding, dimerization, and kinase activation.

The protein localises to the cytoplasm. It localises to the nucleus. It is found in the perinuclear region. The catalysed reaction is L-seryl-[protein] + ATP = O-phospho-L-seryl-[protein] + ADP + H(+). It carries out the reaction L-threonyl-[protein] + ATP = O-phospho-L-threonyl-[protein] + ADP + H(+). It catalyses the reaction L-tyrosyl-[protein] + ATP = O-phospho-L-tyrosyl-[protein] + ADP + H(+). Initially produced in an inactive form and is activated by binding to viral dsRNA, which causes dimerization and autophosphorylation in the activation loop and stimulation of function. ISGylation can activate it in the absence of viral infection. Can also be activated by heparin, pro-inflammatory stimuli, growth factors, cytokines, oxidative stress and the cellular protein PRKRA. Activity is markedly stimulated by manganese ions. Activation is blocked by the cellular proteins TARBP2, DUS2L, NPM1, NCK1 and ADAR. Its function is as follows. IFN-induced dsRNA-dependent serine/threonine-protein kinase that phosphorylates the alpha subunit of eukaryotic translation initiation factor 2 (EIF2S1/eIF-2-alpha) and plays a key role in the innate immune response to viral infection. Inhibits viral replication via the integrated stress response (ISR): EIF2S1/eIF-2-alpha phosphorylation in response to viral infection converts EIF2S1/eIF-2-alpha in a global protein synthesis inhibitor, resulting to a shutdown of cellular and viral protein synthesis, while concomitantly initiating the preferential translation of ISR-specific mRNAs, such as the transcriptional activator ATF4. Exerts its antiviral activity on a wide range of DNA and RNA viruses. Also involved in the regulation of signal transduction, apoptosis, cell proliferation and differentiation: phosphorylates other substrates including p53/TP53, PPP2R5A, DHX9, ILF3 and IRS1. In addition to serine/threonine-protein kinase activity, also has tyrosine-protein kinase activity and phosphorylates CDK1 at 'Tyr-4' upon DNA damage, facilitating its ubiquitination and proteasomal degradation. Either as an adapter protein and/or via its kinase activity, can regulate various signaling pathways (p38 MAP kinase, NF-kappa-B and insulin signaling pathways) and transcription factors (JUN, STAT1, STAT3, IRF1, ATF3) involved in the expression of genes encoding pro-inflammatory cytokines and IFNs. Activates the NF-kappa-B pathway via interaction with IKBKB and TRAF family of proteins and activates the p38 MAP kinase pathway via interaction with MAP2K6. Can act as both a positive and negative regulator of the insulin signaling pathway (ISP). Negatively regulates ISP by inducing the inhibitory phosphorylation of insulin receptor substrate 1 (IRS1) at 'Ser-312' and positively regulates ISP via phosphorylation of PPP2R5A which activates FOXO1, which in turn up-regulates the expression of insulin receptor substrate 2 (IRS2). Can regulate NLRP3 inflammasome assembly and the activation of NLRP3, NLRP1, AIM2 and NLRC4 inflammasomes. Plays a role in the regulation of the cytoskeleton by binding to gelsolin (GSN), sequestering the protein in an inactive conformation away from actin. This Rattus norvegicus (Rat) protein is Interferon-induced, double-stranded RNA-activated protein kinase (Eif2ak2).